The sequence spans 385 residues: NADH-quinone oxidoreductase subunit D 2 (385 aa).

Belongs to the complex I 49 kDa subunit family. In terms of assembly, NDH-1 is composed of 14 different subunits. Subunits NuoB, C, D, E, F, and G constitute the peripheral sector of the complex.

The protein resides in the cell membrane. It carries out the reaction a quinone + NADH + 5 H(+)(in) = a quinol + NAD(+) + 4 H(+)(out). Functionally, NDH-1 shuttles electrons from NADH, via FMN and iron-sulfur (Fe-S) centers, to quinones in the respiratory chain. The immediate electron acceptor for the enzyme in this species is believed to be a menaquinone. Couples the redox reaction to proton translocation (for every two electrons transferred, four hydrogen ions are translocated across the cytoplasmic membrane), and thus conserves the redox energy in a proton gradient. The chain is NADH-quinone oxidoreductase subunit D 2 from Salinispora arenicola (strain CNS-205).